Reading from the N-terminus, the 386-residue chain is Phosphoglycerate kinase (386 aa).

Residues 21-23 (DLN), Arg36, 59-62 (HLGR), Arg112, and Arg145 contribute to the substrate site. ATP-binding positions include Lys196, Glu313, and 339–342 (GGDT).

It belongs to the phosphoglycerate kinase family. Monomer.

It localises to the cytoplasm. The enzyme catalyses (2R)-3-phosphoglycerate + ATP = (2R)-3-phospho-glyceroyl phosphate + ADP. Its pathway is carbohydrate degradation; glycolysis; pyruvate from D-glyceraldehyde 3-phosphate: step 2/5. This is Phosphoglycerate kinase from Haemophilus influenzae (strain 86-028NP).